The chain runs to 245 residues: Uridylate kinase (245 aa).

15–18 (KLSG) is a binding site for ATP. The interval 23-28 (GEEGFG) is involved in allosteric activation by GTP. Position 57 (Gly-57) interacts with UMP. Gly-58 and Arg-62 together coordinate ATP. UMP-binding positions include Asp-77 and 138-145 (TGNPFCTT). The ATP site is built by Thr-165, Tyr-171, and Asp-174.

It belongs to the UMP kinase family. In terms of assembly, homohexamer.

Its subcellular location is the cytoplasm. The catalysed reaction is UMP + ATP = UDP + ADP. It participates in pyrimidine metabolism; CTP biosynthesis via de novo pathway; UDP from UMP (UMPK route): step 1/1. Allosterically activated by GTP. Inhibited by UTP. Functionally, catalyzes the reversible phosphorylation of UMP to UDP. This is Uridylate kinase from Shewanella putrefaciens (strain CN-32 / ATCC BAA-453).